A 280-amino-acid chain; its full sequence is MIQTLTDLSALRALVNGWKREGLRVALVPTMGNLHVGHYSLVMLARQYADRVVSSVFVNPTQFGPNEDFACYPRTPEADLRGLEDAGCDALWLPDVDTMYPLGTALATPIHAPGVSDVLEGECRPGHFDGVCTVVARLFNQVQPDVAAFGKKDYQQLAVIRQMVADLAFPIEILGGSIVREADGLAMSSRNQYLSAEERPISANIHKVLLQMRDSYAVGTPRAQVEDAASHALEQAGFRVDYAVVRLPDLSEPGDGHTGAHVALIAARLGSTRLIDNLEF.

An ATP-binding site is contributed by 31–38; that stretch reads MGNLHVGH. Histidine 38 functions as the Proton donor in the catalytic mechanism. A (R)-pantoate-binding site is contributed by glutamine 62. Glutamine 62 is a binding site for beta-alanine. 150 to 153 provides a ligand contact to ATP; that stretch reads GKKD. (R)-pantoate is bound at residue glutamine 156. ATP contacts are provided by residues valine 179 and 187–190; that span reads MSSR.

It belongs to the pantothenate synthetase family. Homodimer.

The protein localises to the cytoplasm. The enzyme catalyses (R)-pantoate + beta-alanine + ATP = (R)-pantothenate + AMP + diphosphate + H(+). The protein operates within cofactor biosynthesis; (R)-pantothenate biosynthesis; (R)-pantothenate from (R)-pantoate and beta-alanine: step 1/1. Its function is as follows. Catalyzes the condensation of pantoate with beta-alanine in an ATP-dependent reaction via a pantoyl-adenylate intermediate. The chain is Pantothenate synthetase from Xanthomonas oryzae pv. oryzae (strain KACC10331 / KXO85).